A 914-amino-acid chain; its full sequence is PHD finger protein 14 (914 aa).

The tract at residues 19–276 (DALDYDSSDD…EDSLLERPQT (258 aa)) is disordered. Positions 53–68 (ESAAGSESDSDAAAAS) are enriched in low complexity. Residues 90-102 (EKVKESFSEETSS) show a composition bias toward basic and acidic residues. Composition is skewed to acidic residues over residues 155–168 (ELNE…EDDN) and 191–233 (GEED…DSEE). The PHD-type 1 zinc finger occupies 285–346 (ILICCVCLGD…PWFCDACKNG (62 aa)). Positions 288, 291, 305, 308, 313, 316, 340, 343, 351, 354, 371, 374, 407, 410, 424, 429, 434, 437, 461, and 464 each coordinate Zn(2+). The segment at 348-381 (SPSCELCPSQDGIFKETDAGRWVHVVCALYVPGV) adopts a C2HC pre-PHD-type zinc-finger fold. The PHD-type 2 zinc finger occupies 405–465 (KECSLCEDTR…PFFAYCKQHA (61 aa)). Residues 596-644 (MIQIQDNIVEQKNLKDKLESEQEKLHMEYDKLCESLEDLQNVNGQLRTE) are a coiled coil. A PHD-type 3 zinc finger spans residues 692 to 746 (LYSCGICKKNQDQHLLLLCDTCKLHYHLGCLDPPLTRMPKKTKNSYWQCSECDQA). Residues Cys695, Cys698, Cys710, Cys713, His718, Cys721, Cys740, and Cys743 each coordinate Zn(2+). The segment at 777 to 838 (PQEMSPEPKK…PKADDTRTEC (62 aa)) is disordered. Residues 792–802 (TRTRGQKRKRM) are compositionally biased toward basic residues. Residues 803–817 (SICEEEKMEEPLPRE) show a composition bias toward basic and acidic residues. A PHD-type 4 zinc finger spans residues 835 to 888 (RTECTTCKGPGDNENLVRCDECRLCYHFGCLDPPLKKSPKQTGYGWICQECDTS). Cys838, Cys841, Cys853, Cys856, His861, Cys864, Cys882, and Cys885 together coordinate Zn(2+). A disordered region spans residues 887–914 (TSSSKEEEAQEVEEESVNEETAEQEIPD). Acidic residues predominate over residues 894–914 (EAQEVEEESVNEETAEQEIPD).

In terms of assembly, interacts with histone H3.

The protein resides in the nucleus. Functionally, histone-binding protein. Binds preferentially to unmodified histone H3 but can also bind to a lesser extent to histone H3 trimethylated at 'Lys-9' (H3K9me3) as well as to histone H3 monomethylated at 'Lys-27' (H3K27ac) and trimethylated at 'Lys-27' (H3K27me3). Represses PDGFRA expression, thus playing a role in regulation of mesenchymal cell proliferation. The protein is PHD finger protein 14 of Danio rerio (Zebrafish).